A 157-amino-acid chain; its full sequence is Arginine regulator (157 aa).

This sequence belongs to the ArgR family.

Its subcellular location is the cytoplasm. It participates in amino-acid degradation; L-arginine degradation via ADI pathway. In terms of biological role, regulates the transcription of the arc operon, involved in arginine catabolism. The sequence is that of Arginine regulator (argR1) from Streptococcus pyogenes serotype M3 (strain SSI-1).